We begin with the raw amino-acid sequence, 379 residues long: 3-dehydroquinate synthase (379 aa).

NAD(+) is bound by residues 67 to 72 (PGEKNK), 101 to 105 (GIILD), 125 to 126 (TT), K138, and K147. Zn(2+) contacts are provided by E180, H242, and H258.

It belongs to the sugar phosphate cyclases superfamily. Dehydroquinate synthase family. It depends on NAD(+) as a cofactor. The cofactor is Co(2+). Zn(2+) is required as a cofactor.

The protein resides in the cytoplasm. The enzyme catalyses 7-phospho-2-dehydro-3-deoxy-D-arabino-heptonate = 3-dehydroquinate + phosphate. The protein operates within metabolic intermediate biosynthesis; chorismate biosynthesis; chorismate from D-erythrose 4-phosphate and phosphoenolpyruvate: step 2/7. Its function is as follows. Catalyzes the conversion of 3-deoxy-D-arabino-heptulosonate 7-phosphate (DAHP) to dehydroquinate (DHQ). This is 3-dehydroquinate synthase from Chlamydia caviae (strain ATCC VR-813 / DSM 19441 / 03DC25 / GPIC) (Chlamydophila caviae).